A 514-amino-acid polypeptide reads, in one-letter code: Protein nucleotidyltransferase YdiU (514 aa).

Residues glycine 90, glycine 92, arginine 93, lysine 113, aspartate 125, glycine 126, arginine 176, and arginine 183 each coordinate ATP. Aspartate 267 serves as the catalytic Proton acceptor. 2 residues coordinate Mg(2+): asparagine 268 and aspartate 277. Residue aspartate 277 coordinates ATP.

The protein belongs to the SELO family. Mg(2+) serves as cofactor. It depends on Mn(2+) as a cofactor.

The catalysed reaction is L-seryl-[protein] + ATP = 3-O-(5'-adenylyl)-L-seryl-[protein] + diphosphate. The enzyme catalyses L-threonyl-[protein] + ATP = 3-O-(5'-adenylyl)-L-threonyl-[protein] + diphosphate. It catalyses the reaction L-tyrosyl-[protein] + ATP = O-(5'-adenylyl)-L-tyrosyl-[protein] + diphosphate. It carries out the reaction L-histidyl-[protein] + UTP = N(tele)-(5'-uridylyl)-L-histidyl-[protein] + diphosphate. The catalysed reaction is L-seryl-[protein] + UTP = O-(5'-uridylyl)-L-seryl-[protein] + diphosphate. The enzyme catalyses L-tyrosyl-[protein] + UTP = O-(5'-uridylyl)-L-tyrosyl-[protein] + diphosphate. In terms of biological role, nucleotidyltransferase involved in the post-translational modification of proteins. It can catalyze the addition of adenosine monophosphate (AMP) or uridine monophosphate (UMP) to a protein, resulting in modifications known as AMPylation and UMPylation. The polypeptide is Protein nucleotidyltransferase YdiU (Photobacterium profundum (strain SS9)).